The primary structure comprises 542 residues: Neurofilament light polypeptide (542 aa).

N-acetylserine is present on Ser-2. Positions 2 to 93 (SSFSYEPYFS…KSIRTQEKAQ (92 aa)) are head. Thr-21 carries O-linked (GlcNAc) threonine glycosylation. Arg-23 is subject to Asymmetric dimethylarginine; alternate. Residue Arg-23 is modified to Omega-N-methylarginine; alternate. Ser-27 carries an O-linked (GlcNAc) serine glycan. Arg-30 is subject to Omega-N-methylarginine. Tyr-43 bears the Phosphotyrosine mark. A phosphoserine mark is found at Ser-56, Ser-67, and Ser-103. In terms of domain architecture, IF rod spans 90-401 (EKAQLQDLND…KLLEGEETRL (312 aa)). The interval 94-125 (LQDLNDRFASFIERVHELEQQNKVLEAELLVL) is coil 1A. Residues 126-138 (RQKHSEPSRFRAL) form a linker 1 region. A coil 1B region spans residues 139–234 (YEQEIRDLRL…KVHEEEIAEL (96 aa)). Residues 235–253 (QAQIQYAQISVEMDVSSKP) form a linker 12 region. Residues 254–272 (DLSAALKDIRAQYEKLAAK) are coil 2A. The interval 273–281 (NMQNAEEWF) is linker 2. Residues 282 to 397 (KSRFTVLTES…AAYRKLLEGE (116 aa)) form a coil 2B region. The epitope; recognized by IF-specific monoclonal antibody stretch occupies residues 382–392 (ALDIEIAAYRK). A tail, subdomain A region spans residues 398–444 (ETRLSFTSVGSITSGYSQSSQVFGRSAYSGLQSSSYLMSARAFPAYY). The segment at 398–542 (ETRLSFTSVG…GEEQAAKKKD (145 aa)) is tail. Residues 445 to 542 (TSHVQEEQSE…GEEQAAKKKD (98 aa)) form a tail, subdomain B (acidic) region. The interval 451 to 542 (EQSEVEETIE…GEEQAAKKKD (92 aa)) is disordered. Ser-453 carries the phosphoserine modification. The span at 460–471 (EATKAEEAKDEP) shows a compositional bias: basic and acidic residues. Acidic residues predominate over residues 472–527 (PSEGEAEEEEKEKEEGEEEEGAEEEEAAKDESEDAKEEEGGEGEEEDTKESEEEEK). Phosphoserine is present on residues Ser-473 and Ser-503. The residue at position 519 (Thr-519) is a Phosphothreonine. Phosphoserine occurs at positions 522 and 531. Over residues 528–542 (KEESAGEEQAAKKKD) the composition is skewed to basic and acidic residues.

Belongs to the intermediate filament family. Forms homodimers (in vitro). Forms heterodimers with NEFH or NEFM; which can further hetero-oligomerize (in vitro). Forms heterodimers with INA (in vitro). Interacts with ARHGEF28. Interacts with TRIM2. In terms of processing, O-glycosylated; contains three N-acetylglucosamine side chains. Phosphorylated in the head and rod regions by the PKC kinase PKN1, leading to the inhibition of polymerization. Post-translationally, ubiquitinated in the presence of TRIM2 and UBE2D1. Expressed in the dorsal root ganglion neurons (at protein level).

The protein localises to the cell projection. The protein resides in the axon. It is found in the cytoplasm. Its subcellular location is the cytoskeleton. Neurofilaments usually contain three intermediate filament proteins: NEFL, NEFM, and NEFH which are involved in the maintenance of neuronal caliber. May additionally cooperate with the neuronal intermediate filament proteins PRPH and INA to form neuronal filamentous networks. In Rattus norvegicus (Rat), this protein is Neurofilament light polypeptide (Nefl).